The following is a 319-amino-acid chain: Acetyl-coenzyme A carboxylase carboxyl transferase subunit alpha (319 aa).

The CoA carboxyltransferase C-terminal domain maps to 43–296; that stretch reads LRDKSIELTR…KKQLLFDLSE (254 aa).

It belongs to the AccA family. As to quaternary structure, acetyl-CoA carboxylase is a heterohexamer composed of biotin carboxyl carrier protein (AccB), biotin carboxylase (AccC) and two subunits each of ACCase subunit alpha (AccA) and ACCase subunit beta (AccD).

Its subcellular location is the cytoplasm. It catalyses the reaction N(6)-carboxybiotinyl-L-lysyl-[protein] + acetyl-CoA = N(6)-biotinyl-L-lysyl-[protein] + malonyl-CoA. The protein operates within lipid metabolism; malonyl-CoA biosynthesis; malonyl-CoA from acetyl-CoA: step 1/1. Its function is as follows. Component of the acetyl coenzyme A carboxylase (ACC) complex. First, biotin carboxylase catalyzes the carboxylation of biotin on its carrier protein (BCCP) and then the CO(2) group is transferred by the carboxyltransferase to acetyl-CoA to form malonyl-CoA. The chain is Acetyl-coenzyme A carboxylase carboxyl transferase subunit alpha from Baumannia cicadellinicola subsp. Homalodisca coagulata.